Consider the following 308-residue polypeptide: Limonin dehydrogenase (308 aa).

The protein belongs to the aldehyde dehydrogenase family.

It localises to the periplasm. With respect to regulation, completely inhibited by HgCl(2), CoCl(2) and CaCl(2). Its function is as follows. Catalyzes the NAD(+)-dependent conversion of limonin. This chain is Limonin dehydrogenase, found in Pseudomonas putida (Arthrobacter siderocapsulatus).